Here is an 87-residue protein sequence, read N- to C-terminus: Small ribosomal subunit protein bS20 (87 aa).

Residues 1–15 (MANTRSAKKMVRKIA) are compositionally biased toward basic residues. Disordered regions lie at residues 1–22 (MANTRSAKKMVRKIAARTDVNK) and 64–87 (KGVTHKNTASRKVSRLSARVKAMA).

This sequence belongs to the bacterial ribosomal protein bS20 family.

In terms of biological role, binds directly to 16S ribosomal RNA. The protein is Small ribosomal subunit protein bS20 of Hyphomonas neptunium (strain ATCC 15444).